We begin with the raw amino-acid sequence, 551 residues long: Probable terpene synthase 8 (551 aa).

Asp307, Asp311, and Glu457 together coordinate Mg(2+). Positions 307–311 (DDTYD) match the DDXXD motif motif.

Belongs to the terpene synthase family. Mg(2+) serves as cofactor.

Its function is as follows. Probable sesquiterpene synthase. This chain is Probable terpene synthase 8 (TPS8), found in Ricinus communis (Castor bean).